A 405-amino-acid polypeptide reads, in one-letter code: Adenylosuccinate synthetase (405 aa).

Residues 12 to 18 and 40 to 42 contribute to the GTP site; these read GDEGKGK and GHT. Catalysis depends on Asp13, which acts as the Proton acceptor. Asp13 and Gly40 together coordinate Mg(2+). Residues 13-16, 38-41, Thr121, Arg135, Gln213, Thr228, and Arg297 contribute to the IMP site; these read DEGK and NAGH. The active-site Proton donor is the His41. Substrate is bound at residue 293-299; the sequence is TTTGRAR. Residues Arg299, 325 to 327, and 390 to 392 contribute to the GTP site; these read KMD and SAG.

It belongs to the adenylosuccinate synthetase family. In terms of assembly, homodimer. Requires Mg(2+) as cofactor.

It localises to the cytoplasm. It catalyses the reaction IMP + L-aspartate + GTP = N(6)-(1,2-dicarboxyethyl)-AMP + GDP + phosphate + 2 H(+). The protein operates within purine metabolism; AMP biosynthesis via de novo pathway; AMP from IMP: step 1/2. In terms of biological role, plays an important role in the de novo pathway of purine nucleotide biosynthesis. Catalyzes the first committed step in the biosynthesis of AMP from IMP. This chain is Adenylosuccinate synthetase, found in Deinococcus deserti (strain DSM 17065 / CIP 109153 / LMG 22923 / VCD115).